Reading from the N-terminus, the 397-residue chain is DNA-directed RNA polymerase subunit Rpo1C (397 aa).

Belongs to the RNA polymerase beta' chain family. As to quaternary structure, part of the RNA polymerase complex.

It localises to the cytoplasm. The catalysed reaction is RNA(n) + a ribonucleoside 5'-triphosphate = RNA(n+1) + diphosphate. In terms of biological role, DNA-dependent RNA polymerase (RNAP) catalyzes the transcription of DNA into RNA using the four ribonucleoside triphosphates as substrates. Forms part of the jaw domain. In Pyrococcus horikoshii (strain ATCC 700860 / DSM 12428 / JCM 9974 / NBRC 100139 / OT-3), this protein is DNA-directed RNA polymerase subunit Rpo1C.